Reading from the N-terminus, the 435-residue chain is Methylenetetrahydrofolate--tRNA-(uracil-5-)-methyltransferase TrmFO (435 aa).

FAD is bound at residue 9 to 14; it reads GGGLAG.

The protein belongs to the MnmG family. TrmFO subfamily. The cofactor is FAD.

The protein localises to the cytoplasm. It carries out the reaction uridine(54) in tRNA + (6R)-5,10-methylene-5,6,7,8-tetrahydrofolate + NADH + H(+) = 5-methyluridine(54) in tRNA + (6S)-5,6,7,8-tetrahydrofolate + NAD(+). The enzyme catalyses uridine(54) in tRNA + (6R)-5,10-methylene-5,6,7,8-tetrahydrofolate + NADPH + H(+) = 5-methyluridine(54) in tRNA + (6S)-5,6,7,8-tetrahydrofolate + NADP(+). Catalyzes the folate-dependent formation of 5-methyl-uridine at position 54 (M-5-U54) in all tRNAs. In Citrifermentans bemidjiense (strain ATCC BAA-1014 / DSM 16622 / JCM 12645 / Bem) (Geobacter bemidjiensis), this protein is Methylenetetrahydrofolate--tRNA-(uracil-5-)-methyltransferase TrmFO.